Consider the following 943-residue polypeptide: Translation initiation factor IF-2 (943 aa).

The disordered stretch occupies residues 29–357 (LSVKSHSSSV…KPVTERKFHE (329 aa)). 5 stretches are compositionally biased toward basic and acidic residues: residues 69-82 (PKEE…DKAS), 112-137 (FKAE…DNRN), 145-155 (QGKRHNNDRRN), 163-196 (DHNK…RDNA), and 224-253 (RQSE…EKQQ). Positions 254-266 (AEVAVQKAAAETK) are enriched in low complexity. Residues 296 to 309 (KSRDNRRVNEDGPK) show a composition bias toward basic and acidic residues. The segment covering 313-332 (NNKWNNQNQVRNQRNSNWNK) has biased composition (low complexity). A tr-type G domain is found at 445–614 (ERAPVVTIMG…LLVAEVEELK (170 aa)). The G1 stretch occupies residues 454 to 461 (GHVDHGKT). 454–461 (GHVDHGKT) contributes to the GTP binding site. Positions 479–483 (GITQH) are G2. The interval 500–503 (DTPG) is G3. GTP is bound by residues 500–504 (DTPGH) and 554–557 (NKID). The segment at 554 to 557 (NKID) is G4. The segment at 590-592 (SAK) is G5.

It belongs to the TRAFAC class translation factor GTPase superfamily. Classic translation factor GTPase family. IF-2 subfamily.

It is found in the cytoplasm. Its function is as follows. One of the essential components for the initiation of protein synthesis. Protects formylmethionyl-tRNA from spontaneous hydrolysis and promotes its binding to the 30S ribosomal subunits. Also involved in the hydrolysis of GTP during the formation of the 70S ribosomal complex. The sequence is that of Translation initiation factor IF-2 from Streptococcus thermophilus (strain CNRZ 1066).